Consider the following 373-residue polypeptide: Ribosomal protein uL16 3-hydroxylase (373 aa).

One can recognise a JmjC domain in the interval P92–L219. Substrate is bound by residues S114, H125–D127, R140, and H187. Residues H125 and D127 each coordinate Fe cation. H187 contributes to the Fe cation binding site.

It belongs to the ROX family. RoxA/YcfD subfamily. In terms of assembly, homodimer. Fe(2+) serves as cofactor.

The catalysed reaction is L-arginyl-[ribosomal protein uL16] + 2-oxoglutarate + O2 = (3R)-3-hydroxy-L-arginyl-[ribosomal protein uL16] + succinate + CO2. In terms of biological role, growth-regulating oxygenase that catalyzes the hydroxylation of ribosomal protein uL16 on 'Arg-81'. The protein is Ribosomal protein uL16 3-hydroxylase (roxA) of Escherichia coli (strain K12).